A 239-amino-acid polypeptide reads, in one-letter code: Ribonuclease PH (239 aa).

Phosphate contacts are provided by residues R86 and 124–126 (GTR).

Belongs to the RNase PH family. As to quaternary structure, homohexameric ring arranged as a trimer of dimers.

It catalyses the reaction tRNA(n+1) + phosphate = tRNA(n) + a ribonucleoside 5'-diphosphate. Its function is as follows. Phosphorolytic 3'-5' exoribonuclease that plays an important role in tRNA 3'-end maturation. Removes nucleotide residues following the 3'-CCA terminus of tRNAs; can also add nucleotides to the ends of RNA molecules by using nucleoside diphosphates as substrates, but this may not be physiologically important. Probably plays a role in initiation of 16S rRNA degradation (leading to ribosome degradation) during starvation. The polypeptide is Ribonuclease PH (Sodalis glossinidius (strain morsitans)).